The chain runs to 335 residues: Selenide, water dikinase (335 aa).

The active site involves Sec7. Position 7 (Sec7) is a non-standard amino acid, selenocysteine. ATP contacts are provided by residues Lys10 and 36–38 (LGD). Asp39 provides a ligand contact to Mg(2+). ATP contacts are provided by residues Asp55, Asp78, and 126–128 (GHT). Asp78 serves as a coordination point for Mg(2+). Asp232 contacts Mg(2+).

This sequence belongs to the selenophosphate synthase 1 family. Class I subfamily. In terms of assembly, homodimer. Requires Mg(2+) as cofactor.

The catalysed reaction is hydrogenselenide + ATP + H2O = selenophosphate + AMP + phosphate + 2 H(+). In terms of biological role, synthesizes selenophosphate from selenide and ATP. This chain is Selenide, water dikinase, found in Methanococcus maripaludis (strain DSM 14266 / JCM 13030 / NBRC 101832 / S2 / LL).